We begin with the raw amino-acid sequence, 430 residues long: Septin-14 (430 aa).

The Septin-type G domain occupies 48 to 313 (KGFSFNILCV…ECYRSNRLQK (266 aa)). A G1 motif region spans residues 58–65 (GETGIGKT). GTP contacts are provided by residues 58–65 (GETGIGKT), Gly113, 194–202 (KADSLSKND), Gly246, and Arg261. The G3 motif stretch occupies residues 110–113 (KTVG). The segment at 193 to 196 (AKAD) is G4 motif. Positions 329–410 (QEMYEAKRRE…IIDFYKMKAA (82 aa)) form a coiled coil. Residues 367 to 430 (DAEKELQDKF…NIKKDKDRKK (64 aa)) form a required for interaction with SEPTIN4. Required for migration of cortical neurons during corticogenesis region.

Belongs to the TRAFAC class TrmE-Era-EngA-EngB-Septin-like GTPase superfamily. Septin GTPase family. In terms of assembly, septins polymerize into heterooligomeric protein complexes that form filaments, and can associate with cellular membranes, actin filaments and microtubules. GTPase activity is required for filament formation. Interacts with ACTN4. Interacts with SEPTIN9. Interacts (via C-terminus) with SEPTIN4. As to expression, expressed in the testis and brain including the cerebrum, hippocampus and cerebellum (at protein level).

The protein localises to the cytoplasm. It localises to the cytoskeleton. The protein resides in the cell projection. It is found in the axon. Its subcellular location is the dendrite. The protein localises to the perikaryon. It localises to the perinuclear region. The protein resides in the cytoplasmic vesicle. It is found in the secretory vesicle. Its subcellular location is the acrosome. Filament-forming cytoskeletal GTPase. Involved in the migration of cortical neurons and the formation of neuron leading processes during embryonic development. Plays a role in sperm head formation during spermiogenesis, potentially via facilitating localization of ACTN4 to cell filaments. This Mus musculus (Mouse) protein is Septin-14.